A 741-amino-acid polypeptide reads, in one-letter code: NAD(P)H-quinone oxidoreductase subunit 5, chloroplastic (741 aa).

16 consecutive transmembrane segments (helical) span residues 9 to 29 (WVIP…LFFI), 39 to 59 (IWAF…IQLS), 89 to 109 (IDPL…LVLI), 125 to 145 (FVYI…SNLI), 147 to 167 (IYFF…FWFT), 185 to 205 (GDFG…SLEF), 219 to 239 (NGIN…GAVA), 258 to 278 (TPIS…FLLA), 280 to 300 (LFPL…VGTI), 327 to 347 (LGYM…FHLI), 354 to 374 (ALLF…VGYS), 396 to 416 (TTFL…CFWS), 425 to 445 (WLYS…TAFY), 542 to 562 (LFPL…GISF), 605 to 625 (AISS…LYGS), and 721 to 741 (ISSY…FFIS).

Belongs to the complex I subunit 5 family. In terms of assembly, NDH is composed of at least 16 different subunits, 5 of which are encoded in the nucleus.

The protein resides in the plastid. It is found in the chloroplast thylakoid membrane. The catalysed reaction is a plastoquinone + NADH + (n+1) H(+)(in) = a plastoquinol + NAD(+) + n H(+)(out). It catalyses the reaction a plastoquinone + NADPH + (n+1) H(+)(in) = a plastoquinol + NADP(+) + n H(+)(out). Functionally, NDH shuttles electrons from NAD(P)H:plastoquinone, via FMN and iron-sulfur (Fe-S) centers, to quinones in the photosynthetic chain and possibly in a chloroplast respiratory chain. The immediate electron acceptor for the enzyme in this species is believed to be plastoquinone. Couples the redox reaction to proton translocation, and thus conserves the redox energy in a proton gradient. In Lolium perenne (Perennial ryegrass), this protein is NAD(P)H-quinone oxidoreductase subunit 5, chloroplastic (ndhF).